The primary structure comprises 494 residues: Probable cytosol aminopeptidase (494 aa).

Mn(2+)-binding residues include Lys260 and Asp265. Lys272 is a catalytic residue. Mn(2+) contacts are provided by Asp283, Asp342, and Glu344. The active site involves Arg346.

It belongs to the peptidase M17 family. It depends on Mn(2+) as a cofactor.

The protein resides in the cytoplasm. It carries out the reaction Release of an N-terminal amino acid, Xaa-|-Yaa-, in which Xaa is preferably Leu, but may be other amino acids including Pro although not Arg or Lys, and Yaa may be Pro. Amino acid amides and methyl esters are also readily hydrolyzed, but rates on arylamides are exceedingly low.. The enzyme catalyses Release of an N-terminal amino acid, preferentially leucine, but not glutamic or aspartic acids.. Presumably involved in the processing and regular turnover of intracellular proteins. Catalyzes the removal of unsubstituted N-terminal amino acids from various peptides. In Bacillus cereus (strain ATCC 14579 / DSM 31 / CCUG 7414 / JCM 2152 / NBRC 15305 / NCIMB 9373 / NCTC 2599 / NRRL B-3711), this protein is Probable cytosol aminopeptidase.